Consider the following 606-residue polypeptide: CDPK-related kinase 8 (606 aa).

Polar residues predominate over residues 1-14; the sequence is MGGCTSKPSTSSGR. A disordered region spans residues 1–132; it reads MGGCTSKPST…TEVPQREEEE (132 aa). Residue glycine 2 is the site of N-myristoyl glycine attachment. Basic residues predominate over residues 98–110; the sequence is KHIRAALRRRKGK. Residues 150 to 412 enclose the Protein kinase domain; that stretch reads VELGEEIGRG…ASQALMHPWI (263 aa). Residues 156–164 and lysine 182 each bind ATP; that span reads IGRGHFGYT. Residue aspartate 278 is the Proton acceptor of the active site. Serine 318 carries the post-translational modification Phosphoserine. The interval 418–448 is autoinhibitory domain; it reads DMNIPFDILIFRQMKAYLRSSSLRKAALRAL. Residues 437–457 form a calmodulin binding (CaMBD) region; it reads SSSLRKAALRALSKTLIKDEI. EF-hand domains lie at 455 to 491, 492 to 527, 528 to 567, and 570 to 599; these read DEIL…ATEA, MKES…VHQH, ESLD…GPSI, and HSVL…VSVR. Ca(2+)-binding residues include asparagine 470, aspartate 472, glutamate 516, aspartate 545, asparagine 547, asparagine 549, glutamate 556, aspartate 581, and lysine 583. Serine 585 carries the post-translational modification Phosphoserine.

This sequence belongs to the protein kinase superfamily. Ser/Thr protein kinase family. CDPK subfamily. Binds calmodulin (CaM) in a calcium-dependent manner. In terms of processing, autophosphorylated.

The protein localises to the membrane. The catalysed reaction is L-seryl-[protein] + ATP = O-phospho-L-seryl-[protein] + ADP + H(+). It carries out the reaction L-threonyl-[protein] + ATP = O-phospho-L-threonyl-[protein] + ADP + H(+). Its activity is regulated as follows. Activated by calcium and calmodulin. Autophosphorylation may play an important role in the regulation of the kinase activity. Functionally, may play a role in signal transduction pathways that involve calcium as a second messenger. The protein is CDPK-related kinase 8 (CRK8) of Arabidopsis thaliana (Mouse-ear cress).